Reading from the N-terminus, the 520-residue chain is Bifunctional purine biosynthesis protein PurH (520 aa).

Positions 1 to 150 (MSDDRKAIKR…KNHPSVAVVV (150 aa)) constitute an MGS-like domain.

This sequence belongs to the PurH family.

The catalysed reaction is (6R)-10-formyltetrahydrofolate + 5-amino-1-(5-phospho-beta-D-ribosyl)imidazole-4-carboxamide = 5-formamido-1-(5-phospho-D-ribosyl)imidazole-4-carboxamide + (6S)-5,6,7,8-tetrahydrofolate. It catalyses the reaction IMP + H2O = 5-formamido-1-(5-phospho-D-ribosyl)imidazole-4-carboxamide. It functions in the pathway purine metabolism; IMP biosynthesis via de novo pathway; 5-formamido-1-(5-phospho-D-ribosyl)imidazole-4-carboxamide from 5-amino-1-(5-phospho-D-ribosyl)imidazole-4-carboxamide (10-formyl THF route): step 1/1. It participates in purine metabolism; IMP biosynthesis via de novo pathway; IMP from 5-formamido-1-(5-phospho-D-ribosyl)imidazole-4-carboxamide: step 1/1. This Corynebacterium glutamicum (strain ATCC 13032 / DSM 20300 / JCM 1318 / BCRC 11384 / CCUG 27702 / LMG 3730 / NBRC 12168 / NCIMB 10025 / NRRL B-2784 / 534) protein is Bifunctional purine biosynthesis protein PurH.